A 263-amino-acid chain; its full sequence is Probable ABC transporter permease protein ycf63 (263 aa).

The next 5 membrane-spanning stretches (helical) occupy residues I43–F63, E70–T89, I150–M170, I188–I208, and S230–F250.

The protein belongs to the MlaE permease family.

Its subcellular location is the plastid. The protein localises to the chloroplast membrane. Could be part of an ABC transporter complex. In Pyropia yezoensis (Susabi-nori), this protein is Probable ABC transporter permease protein ycf63 (ycf63).